The primary structure comprises 27 residues: Protamine-B (27 aa).

The segment at 1-27 (ARRRRRSSRPQRRRRRRRHGRRRRGRR) is disordered.

As to expression, testis.

It is found in the nucleus. It localises to the chromosome. Protamines substitute for histones in the chromatin of sperm during the haploid phase of spermatogenesis. They compact sperm DNA into a highly condensed, stable and inactive complex. The protein is Protamine-B of Acipenser stellatus (Sevruga).